A 343-amino-acid chain; its full sequence is RNA-binding protein 43 (343 aa).

One can recognise an RRM domain in the interval 15–90 (RTVVVSGLPV…PLLTVSHFSE (76 aa)). The interval 170–200 (RRNWTGQNPRRVLQKNENSAPTLGTSVPEPA) is disordered. The span at 184–194 (KNENSAPTLGT) shows a compositional bias: polar residues.

The sequence is that of RNA-binding protein 43 (Rbm43) from Rattus norvegicus (Rat).